The sequence spans 103 residues: Ig kappa-b4 chain C region (103 aa).

Residues 5-95 (PTVLIFPPAA…KVTQGTTSVV (91 aa)) enclose the Ig-like domain. Cys-26 and Cys-85 form a disulfide bridge.

In Oryctolagus cuniculus (Rabbit), this protein is Ig kappa-b4 chain C region.